Here is a 1073-residue protein sequence, read N- to C-terminus: Probable inorganic carbon transporter subunit DabA 2 (1073 aa).

Over residues 1-20 the composition is skewed to polar residues; the sequence is MSSGNTSSQNHSPVNNQPTR. Residues 1-35 form a disordered region; sequence MSSGNTSSQNHSPVNNQPTRLKSPLPALHKDTQPN. Zn(2+)-binding residues include Cys535, Asp537, His721, and Cys736.

The protein belongs to the inorganic carbon transporter (TC 9.A.2) DabA family. As to quaternary structure, forms a complex with DabB. The cofactor is Zn(2+).

The protein localises to the cell inner membrane. Part of an energy-coupled inorganic carbon pump. This Rhodopirellula baltica (strain DSM 10527 / NCIMB 13988 / SH1) protein is Probable inorganic carbon transporter subunit DabA 2.